The primary structure comprises 304 residues: Ferredoxin fas2 (304 aa).

In terms of domain architecture, 4Fe-4S ferredoxin-type spans 2-29 (KVVVNERRCFGSGQCVLVAPEVFEQSND). [3Fe-4S] cluster-binding residues include cysteine 10, cysteine 16, and cysteine 54. The segment at 66 to 304 (MRQEPTEFSY…QSARSSIQQR (239 aa)) is transketolase-like.

This sequence in the C-terminal section; belongs to the transketolase family. [3Fe-4S] cluster serves as cofactor.

In terms of biological role, plays a role in electron transfer. The fas operon encodes genes involved in cytokinin production and in host plant fasciation (leafy gall). In Rhodococcoides fascians (Rhodococcus fascians), this protein is Ferredoxin fas2 (fas2).